The chain runs to 396 residues: Fumarate--(S)-2,3-diaminopropanoate ligase (396 aa).

It catalyses the reaction (S)-2,3-diaminopropanoate + fumarate + ATP = N(3)-fumaroyl-(S)-2,3-diaminopropanoate + AMP + diphosphate. It participates in antibiotic biosynthesis. Its function is as follows. Involved in dapdiamide antibiotics biosynthesis. Ligates fumarate and 2,3-diaminopropionate (DAP) to form N-beta-fumaroyl-DAP. Can also form N-succinoyl-DAP from succinate and DAP, with lower efficiency. This is Fumarate--(S)-2,3-diaminopropanoate ligase from Enterobacter agglomerans (Erwinia herbicola).